The following is a 79-amino-acid chain: MSLKSLVRKVFSFLLLIPIYFYRVCISPLTPPSCRFTPTCSAYAVEAIKKHGPVKGLYLAVRRILRCHPWGGSGYDPVP.

It belongs to the UPF0161 family.

The protein resides in the cell inner membrane. In terms of biological role, could be involved in insertion of integral membrane proteins into the membrane. This Bacteroides thetaiotaomicron (strain ATCC 29148 / DSM 2079 / JCM 5827 / CCUG 10774 / NCTC 10582 / VPI-5482 / E50) protein is Putative membrane protein insertion efficiency factor.